A 200-amino-acid polypeptide reads, in one-letter code: NADH-quinone oxidoreductase subunit C (200 aa).

The protein belongs to the complex I 30 kDa subunit family. In terms of assembly, NDH-1 is composed of 14 different subunits. Subunits NuoB, C, D, E, F, and G constitute the peripheral sector of the complex.

It is found in the cell inner membrane. It catalyses the reaction a quinone + NADH + 5 H(+)(in) = a quinol + NAD(+) + 4 H(+)(out). NDH-1 shuttles electrons from NADH, via FMN and iron-sulfur (Fe-S) centers, to quinones in the respiratory chain. The immediate electron acceptor for the enzyme in this species is believed to be ubiquinone. Couples the redox reaction to proton translocation (for every two electrons transferred, four hydrogen ions are translocated across the cytoplasmic membrane), and thus conserves the redox energy in a proton gradient. The polypeptide is NADH-quinone oxidoreductase subunit C (Paraburkholderia xenovorans (strain LB400)).